An 87-amino-acid polypeptide reads, in one-letter code: U3-theraphotoxin-Hhn1i (87 aa).

A signal peptide spans 1-24 (MVNMEASMFLTFAGLVLLFVVCYA). Positions 25–52 (SESEEKEFPKEMLSSIFAVDNDFKQEER) are excised as a propeptide. 3 disulfides stabilise this stretch: Cys-54/Cys-67, Cys-61/Cys-72, and Cys-66/Cys-79.

Belongs to the neurotoxin 10 (Hwtx-1) family. 51 (Hntx-8) subfamily. Hntx-8 sub-subfamily. As to expression, expressed by the venom gland.

The protein localises to the secreted. Its function is as follows. Ion channel inhibitor. The protein is U3-theraphotoxin-Hhn1i of Cyriopagopus hainanus (Chinese bird spider).